The sequence spans 1137 residues: Bone sialoprotein-binding protein (1137 aa).

An N-terminal signal peptide occupies residues 1-52 (MINRDNKKAITKKGMISNRLNKFSIRKYTVGTASILVGTTLIFGLGNQEAKA). Residues 53 to 601 (AENTSTENAK…GDGTVKPEEK (549 aa)) are ligand binding A region. Disordered stretches follow at residues 54 to 249 (ENTS…TAPT) and 675 to 697 (LPTKENGTTDGEKDSNGSSVTVK). Residues 61 to 75 (AKQDEASASDNKEVV) are compositionally biased toward basic and acidic residues. The span at 77 to 89 (ETENNSTQKNDLT) shows a compositional bias: polar residues. The span at 92–106 (IKKETNTDSHQEAKE) shows a compositional bias: basic and acidic residues. Residues 109–126 (TTSSTQQQQNNATTSTET) are compositionally biased toward low complexity. Residues 130–145 (NIEKENVKPSTDKTAT) show a composition bias toward basic and acidic residues. The span at 158–207 (PNNTNNDVTTKPSTSEIQTTPTTPQESTNIENSQPQPTPSKVDNQVTDAT) shows a compositional bias: polar residues. The span at 216–241 (SKEELKNNPEKLKELVRNDSNTDRST) shows a compositional bias: basic and acidic residues. 3 CNA-B domains span residues 602–714 (LYKI…YKEP), 715–824 (KYNL…YKTP), and 825–935 (KYSL…EEDT). Residues 896-1112 (TQTGTNTTED…TGSENNGSNN (217 aa)) form a disordered region. 2 stretches are compositionally biased toward acidic residues: residues 903–913 (TEDDKDADGGE) and 930–1076 (YFEE…DSDS). The LPXTG sorting signal motif lies at 1100 to 1104 (LPETG). Threonine 1103 bears the Pentaglycyl murein peptidoglycan amidated threonine mark. A propeptide spans 1104–1137 (GSENNGSNNATLFGGLFAALGSLLLFGRRKKQNK) (removed by sortase).

The protein belongs to the serine-aspartate repeat-containing protein (SDr) family.

The protein resides in the secreted. The protein localises to the cell wall. In terms of biological role, specifically interacts with bone sialoprotein (BSP), a glycoprotein of bone and dentin extracellular matrix. Could contribute to staphylococcal osteomyelitis and arthritis. This is Bone sialoprotein-binding protein (bbp) from Staphylococcus aureus (strain MRSA252).